The primary structure comprises 503 residues: 2,3-bisphosphoglycerate-independent phosphoglycerate mutase (503 aa).

2 residues coordinate Mn(2+): aspartate 10 and serine 60. Serine 60 functions as the Phosphoserine intermediate in the catalytic mechanism. Substrate contacts are provided by residues histidine 121, 150–151 (RD), arginine 181, arginine 187, 256–259 (RPDR), and lysine 330. Aspartate 396, histidine 400, aspartate 437, histidine 438, and histidine 455 together coordinate Mn(2+).

It belongs to the BPG-independent phosphoglycerate mutase family. Monomer. The cofactor is Mn(2+).

The enzyme catalyses (2R)-2-phosphoglycerate = (2R)-3-phosphoglycerate. It functions in the pathway carbohydrate degradation; glycolysis; pyruvate from D-glyceraldehyde 3-phosphate: step 3/5. In terms of biological role, catalyzes the interconversion of 2-phosphoglycerate and 3-phosphoglycerate. The chain is 2,3-bisphosphoglycerate-independent phosphoglycerate mutase from Mycoplasmoides gallisepticum (strain R(low / passage 15 / clone 2)) (Mycoplasma gallisepticum).